The following is a 350-amino-acid chain: tRNA uridine(34) hydroxylase (350 aa).

Residues 146–240 (DDPDALFIDM…YARKAREQGL (95 aa)) enclose the Rhodanese domain. C200 (cysteine persulfide intermediate) is an active-site residue.

Belongs to the TrhO family.

It catalyses the reaction uridine(34) in tRNA + AH2 + O2 = 5-hydroxyuridine(34) in tRNA + A + H2O. Its function is as follows. Catalyzes oxygen-dependent 5-hydroxyuridine (ho5U) modification at position 34 in tRNAs, the first step in 5-carboxymethoxyuridine (cmo5U) biosynthesis. May be part of an alternate pathway, which is able to bypass cmo5U biogenesis in a subset of tRNAs under aerobic conditions. In Escherichia coli O45:K1 (strain S88 / ExPEC), this protein is tRNA uridine(34) hydroxylase.